A 382-amino-acid chain; its full sequence is Galactokinase (382 aa).

Substrate is bound at residue 34-37 (EHTD). 124–130 (GAGLSSS) is an ATP binding site. S130 and E162 together coordinate Mg(2+). The active-site Proton acceptor is D174. Residue Y223 participates in substrate binding.

This sequence belongs to the GHMP kinase family. GalK subfamily.

It is found in the cytoplasm. The enzyme catalyses alpha-D-galactose + ATP = alpha-D-galactose 1-phosphate + ADP + H(+). The protein operates within carbohydrate metabolism; galactose metabolism. Its function is as follows. Catalyzes the transfer of the gamma-phosphate of ATP to D-galactose to form alpha-D-galactose-1-phosphate (Gal-1-P). The polypeptide is Galactokinase (Citrobacter koseri (strain ATCC BAA-895 / CDC 4225-83 / SGSC4696)).